A 150-amino-acid polypeptide reads, in one-letter code: Calmodulin-like protein 7 (150 aa).

EF-hand domains are found at residues Met-1 to Tyr-36, Ile-37 to Glu-72, Glu-75 to Lys-110, and Lys-113 to Asn-148. Ca(2+)-binding residues include Asp-14, Asn-16, Asp-18, Thr-20, Glu-25, Asp-50, Asn-52, Asp-54, Cys-56, Glu-61, Asp-88, Asn-90, Asp-92, Glu-99, Asp-126, Asp-128, Asp-130, Arg-132, and Glu-137.

The protein belongs to the calmodulin family.

Its function is as follows. Potential calcium sensor. This is Calmodulin-like protein 7 (CML7) from Arabidopsis thaliana (Mouse-ear cress).